A 179-amino-acid chain; its full sequence is Translationally-controlled tumor protein homolog (179 aa).

The TCTP domain occupies 1 to 179; the sequence is MIIYKDIISG…WKHGLEEMKV (179 aa).

It belongs to the TCTP family.

The protein localises to the cytoplasm. The protein resides in the cytoskeleton. Involved in protein synthesis. Involved in microtubule stabilization. Involved in osmoadaptation. The polypeptide is Translationally-controlled tumor protein homolog (Emericella nidulans (strain FGSC A4 / ATCC 38163 / CBS 112.46 / NRRL 194 / M139) (Aspergillus nidulans)).